Consider the following 355-residue polypeptide: N6-Methyl-AMP deaminase (355 aa).

Zn(2+) is bound by residues His24 and His26. Residues His26, Asn28, His74, 106 to 109 (STPR), Asp148, and Gly181 contribute to the N(6)-methyl-AMP site. His208 lines the Zn(2+) pocket. Residues Glu211, Asp293, and Asp294 each coordinate N(6)-methyl-AMP. The active-site Proton donor is Glu211. Residue Asp293 coordinates Zn(2+).

It belongs to the metallo-dependent hydrolases superfamily. Adenosine and AMP deaminases family. As to quaternary structure, monomer. The cofactor is Zn(2+).

The enzyme catalyses N(6)-methyl-AMP + H2O + H(+) = IMP + methylamine. Functionally, catalyzes the hydrolysis of the free cytosolic methylated adenosine nucleotide N(6)-methyl-AMP (N6-mAMP) to produce inositol monophosphate (IMP) and methylamine. Is required for the catabolism of cytosolic N6-mAMP, which is derived from the degradation of mRNA containing N6-methylated adenine (m6A). Catalyzes the removal of different alkyl groups not only from N6-substituted purine or 2-aminopurine nucleoside monophosphates but also from O6-substituted compounds in vitro. This Homo sapiens (Human) protein is N6-Methyl-AMP deaminase.